The chain runs to 225 residues: Uracil-DNA glycosylase (225 aa).

Residue aspartate 68 is the Proton acceptor of the active site.

This sequence belongs to the uracil-DNA glycosylase (UDG) superfamily. UNG family.

Its subcellular location is the cytoplasm. It catalyses the reaction Hydrolyzes single-stranded DNA or mismatched double-stranded DNA and polynucleotides, releasing free uracil.. Functionally, excises uracil residues from the DNA which can arise as a result of misincorporation of dUMP residues by DNA polymerase or due to deamination of cytosine. This Parafrankia sp. (strain EAN1pec) protein is Uracil-DNA glycosylase.